Reading from the N-terminus, the 158-residue chain is E3 ubiquitin ligase complex SCF subunit sconC (158 aa).

An interaction with the F-box domain of F-box proteins region spans residues 100–158 (ILAANYLDIKALLDVGCKTVANMIKGKSPEEIRKTFNIQNDFTPEEEDQIRRENEWAEE).

The protein belongs to the SKP1 family. As to quaternary structure, component of the SCF (SKP1-CUL1-F-box protein) E3 ubiquitin ligase complexes.

The protein operates within protein modification; protein ubiquitination. In terms of biological role, essential component of the SCF (SKP1-CUL1-F-box protein) E3 ubiquitin ligase complexes, which mediate the ubiquitination and subsequent proteasomal degradation of target proteins. Controls sulfur metabolite repression, probably by mediating the inactivation or degradation of the metR transcription factor. The sequence is that of E3 ubiquitin ligase complex SCF subunit sconC (sconC) from Aspergillus fumigatus (strain CBS 144.89 / FGSC A1163 / CEA10) (Neosartorya fumigata).